A 183-amino-acid chain; its full sequence is A-type ATP synthase subunit E (183 aa).

It belongs to the V-ATPase E subunit family. In terms of assembly, has multiple subunits with at least A(3), B(3), C, D, E, F, H, I and proteolipid K(x).

The protein localises to the cell membrane. In terms of biological role, component of the A-type ATP synthase that produces ATP from ADP in the presence of a proton gradient across the membrane. The chain is A-type ATP synthase subunit E from Methanosarcina acetivorans (strain ATCC 35395 / DSM 2834 / JCM 12185 / C2A).